We begin with the raw amino-acid sequence, 31 residues long: GVPCAESCVWIPCTVTALLGCSCKDKVCYLD.

The cyclopeptide (Gly-Asp) cross-link spans 1–31 (GVPCAESCVWIPCTVTALLGCSCKDKVCYLD). Disulfide bonds link Cys-4/Cys-21, Cys-8/Cys-23, and Cys-13/Cys-28.

Contains 3 disulfide bonds. Post-translationally, this is a cyclic peptide.

Probably participates in a plant defense mechanism. In Clitoria ternatea (Butterfly pea), this protein is Cyclotide cter-C.